The chain runs to 333 residues: Aspartate carbamoyltransferase catalytic subunit (333 aa).

2 residues coordinate carbamoyl phosphate: Arg61 and Thr62. Residue Lys89 participates in L-aspartate binding. The carbamoyl phosphate site is built by Arg111, His144, and Gln147. Positions 184 and 248 each coordinate L-aspartate. Carbamoyl phosphate is bound by residues Gly289 and Pro290.

Belongs to the aspartate/ornithine carbamoyltransferase superfamily. ATCase family. Heterododecamer (2C3:3R2) of six catalytic PyrB chains organized as two trimers (C3), and six regulatory PyrI chains organized as three dimers (R2).

It carries out the reaction carbamoyl phosphate + L-aspartate = N-carbamoyl-L-aspartate + phosphate + H(+). It participates in pyrimidine metabolism; UMP biosynthesis via de novo pathway; (S)-dihydroorotate from bicarbonate: step 2/3. In terms of biological role, catalyzes the condensation of carbamoyl phosphate and aspartate to form carbamoyl aspartate and inorganic phosphate, the committed step in the de novo pyrimidine nucleotide biosynthesis pathway. The polypeptide is Aspartate carbamoyltransferase catalytic subunit (Trichormus variabilis (strain ATCC 29413 / PCC 7937) (Anabaena variabilis)).